A 413-amino-acid polypeptide reads, in one-letter code: Divalent metal cation transporter MntH (413 aa).

Transmembrane regions (helical) follow at residues 19 to 39 (LALM…GNFA), 46 to 66 (ASFG…AMLI), 94 to 114 (VWFY…AEFI), 122 to 142 (LVLG…TFLI), 156 to 176 (VIGG…IFSQ), 196 to 216 (AVFL…IYLH), 241 to 261 (IAMT…AAAF), 290 to 310 (IFGL…TLAG), 329 to 349 (AITM…TRIL), 350 to 370 (VMSQ…LLIF), and 389 to 409 (IGWA…VGSL).

It belongs to the NRAMP family.

Its subcellular location is the cell inner membrane. In terms of biological role, h(+)-stimulated, divalent metal cation uptake system. The polypeptide is Divalent metal cation transporter MntH (Klebsiella pneumoniae subsp. pneumoniae (strain ATCC 700721 / MGH 78578)).